The following is a 299-amino-acid chain: Glutamyl-Q tRNA(Asp) synthetase (299 aa).

Residues 18–22 (RFAPS) and Glu54 each bind L-glutamate. Positions 21-31 (PSPSGALHFGS) match the 'HIGH' region motif. Residues Cys110, Cys112, Tyr124, and Cys128 each coordinate Zn(2+). L-glutamate-binding residues include Tyr181 and Arg199. The 'KMSKS' region motif lies at 237 to 241 (KLSKQ). Lys240 serves as a coordination point for ATP.

It belongs to the class-I aminoacyl-tRNA synthetase family. GluQ subfamily. The cofactor is Zn(2+).

Functionally, catalyzes the tRNA-independent activation of glutamate in presence of ATP and the subsequent transfer of glutamate onto a tRNA(Asp). Glutamate is transferred on the 2-amino-5-(4,5-dihydroxy-2-cyclopenten-1-yl) moiety of the queuosine in the wobble position of the QUC anticodon. This is Glutamyl-Q tRNA(Asp) synthetase from Shewanella oneidensis (strain ATCC 700550 / JCM 31522 / CIP 106686 / LMG 19005 / NCIMB 14063 / MR-1).